Consider the following 553-residue polypeptide: Solute carrier family 22 member 4 (553 aa).

Topologically, residues 1–20 are cytoplasmic; sequence MRDYDEVIAFLGEWGPFQRL. The helical transmembrane segment at 21–41 threads the bilayer; the sequence is IFFLLSASIIPNGFNGMSVVF. Residues 42–142 lie on the Extracellular side of the membrane; sequence LAGTPEHRCL…NLVCEDDWKT (101 aa). 3 N-linked (GlcNAc...) asparagine glycosylation sites follow: Asn57, Asn64, and Asn91. A helical transmembrane segment spans residues 143 to 163; that stretch reads PLTTSLFFVGVLCGSFVSGQL. At 164-171 the chain is on the cytoplasmic side; it reads SDRFGRKK. Residues 172 to 192 traverse the membrane as a helical segment; sequence VLFATMAVQTGFSFVQIFSTN. Residues 193–197 lie on the Extracellular side of the membrane; the sequence is WEMFT. A helical membrane pass occupies residues 198 to 218; it reads VLFAIVGMGQISNYVVAFILG. Position 218-225 (218-225) interacts with ATP; sequence GTEILSKS. Topologically, residues 219 to 232 are cytoplasmic; that stretch reads TEILSKSVRIIFST. Residues 233-253 traverse the membrane as a helical segment; the sequence is LGVCTFFAIGYMVLPLFAYFI. Residues 254–257 lie on the Extracellular side of the membrane; that stretch reads RDWR. Residues 258-278 form a helical membrane-spanning segment; the sequence is MLLLALTLPGLFCVPLWWFIP. Residues 279-339 lie on the Cytoplasmic side of the membrane; that stretch reads ESPRWLISQR…IILDLFRTRN (61 aa). A helical transmembrane segment spans residues 340 to 360; the sequence is IATITVMAVMLWMLTSVGYFA. Residues 361–373 lie on the Extracellular side of the membrane; sequence LSLNVPNLHGDVY. The chain crosses the membrane as a helical span at residues 374–394; it reads LNCFLSGLIEVPAYFTAWLLL. The Cytoplasmic portion of the chain corresponds to 395–400; the sequence is RTLPRR. A helical membrane pass occupies residues 401–421; it reads YIIAGVLFWGGGVLLLIQVVP. The Extracellular segment spans residues 422 to 428; the sequence is EDYNFVS. A helical transmembrane segment spans residues 429–449; it reads IGLVMLGKFGITSAFSMLYVF. Residues 450-462 are Cytoplasmic-facing; that stretch reads TAELYPTLVRNMA. The helical transmembrane segment at 463–483 threads the bilayer; that stretch reads VGITSMASRVGSIIAPYFVYL. Residues 484-488 lie on the Extracellular side of the membrane; the sequence is GAYNR. Residues 489–509 traverse the membrane as a helical segment; the sequence is LLPYILMGSLTVLIGIITLFF. At 510 to 553 the chain is on the cytoplasmic side; the sequence is PESFGVTLPENLEQMQKVRGFRCGKKSTVSVDREESPKVLITAF.

Belongs to the major facilitator (TC 2.A.1) superfamily. Organic cation transporter (TC 2.A.1.19) family. In terms of assembly, interacts with PDZK1. As to expression, expressed in kidney. Expressed in small intestines. Expressed in liver in non-parenchymal liver tissue such as sinusoidal vessels. Weakly expressed in lung and brain. Expressed in testis and spleen. Expressed in heart.

The protein resides in the apical cell membrane. It is found in the mitochondrion membrane. Its subcellular location is the basal cell membrane. The catalysed reaction is ergothioneine(out) + Na(+)(out) = ergothioneine(in) + Na(+)(in). It catalyses the reaction acetylcholine(in) = acetylcholine(out). The enzyme catalyses (R)-carnitine(out) + Na(+)(out) = (R)-carnitine(in) + Na(+)(in). It carries out the reaction glycine betaine(out) + Na(+)(out) = glycine betaine(in) + Na(+)(in). Allosterically activated by intracellular ATP. Functionally, transporter that mediates the transport of endogenous and microbial zwitterions and organic cations. Functions as a Na(+)-dependent and pH-dependent high affinity microbial symporter of potent food-derived antioxidant ergothioeine. Transports one sodium ion with one ergothioeine molecule. Involved in the absorption of ergothioneine from the luminal/apical side of the small intestine and renal tubular cells, and into non-parenchymal liver cells, thereby contributing to maintain steady-state ergothioneine level in the body. Also mediates the bidirectional transport of acetycholine, although the exact transport mechanism has not been fully identified yet. Most likely exports anti-inflammatory acetylcholine in non-neuronal tissues, thereby contributing to the non-neuronal cholinergic system. Displays a general physiological role linked to better survival by controlling inflammation and oxidative stress, which may be related to ergothioneine and acetycholine transports. May also function as a low-affinity Na(+)-dependent transporter of L-carnitine through the mitochondrial membrane, thereby maintaining intracellular carnitine homeostasis. May contribute to regulate the transport of cationic compounds in testis across the blood-testis-barrier. The protein is Solute carrier family 22 member 4 of Mus musculus (Mouse).